Consider the following 977-residue polypeptide: Disks large-associated protein 1 (977 aa).

Disordered regions lie at residues 150 to 203 (TKSH…GWWS) and 349 to 371 (KAMG…KVAA). Phosphoserine is present on residues serine 169, serine 356, serine 359, serine 362, serine 366, serine 383, serine 412, serine 415, serine 419, serine 422, serine 431, serine 503, serine 510, and serine 562. Position 563 is a phosphothreonine (threonine 563). A phosphoserine mark is found at serine 565 and serine 589. Phosphothreonine is present on threonine 590. Phosphoserine occurs at positions 592 and 595. Interaction with DYL2 stretches follow at residues 650-661 (LSIGIQVDDAEE) and 672-683 (SKFQSVGVQVEE). The disordered stretch occupies residues 899–965 (WKQMDPLDKK…QNSATESAES (67 aa)). Basic and acidic residues-rich tracts occupy residues 903–912 (DPLDKKERRA) and 928–943 (IRER…EARK). The residue at position 932 (serine 932) is a Phosphoserine. Polar residues predominate over residues 954-963 (VRQNSATESA). A PDZ-binding motif is present at residues 975 to 977 (TRL).

Belongs to the SAPAP family. Interacts with guanylate kinase-like domain of DLG1, DLG2, DLG3, DLG4 and AIP1. Interacts with the PDZ domain of SHANK1, SHANK2 and SHANK3. Found in a complex with DLG4 and SHANK1, SHANK2 or SHANK3. Found in a complex with DLG4 and BEGAIN. Interacts with DYL2 and LRFN1. Interacts with MPP2 (via the SH3-Guanylate kinase-like sub-module). Ubiquitinated by TRIM3; leading to proteasomal degradation. As to expression, expressed in brain.

The protein localises to the cell membrane. The protein resides in the postsynaptic density. Its subcellular location is the synapse. Its function is as follows. Part of the postsynaptic scaffold in neuronal cells. The protein is Disks large-associated protein 1 (DLGAP1) of Homo sapiens (Human).